Consider the following 186-residue polypeptide: Elongation factor P (186 aa).

Belongs to the elongation factor P family.

Its subcellular location is the cytoplasm. Its pathway is protein biosynthesis; polypeptide chain elongation. In terms of biological role, involved in peptide bond synthesis. Stimulates efficient translation and peptide-bond synthesis on native or reconstituted 70S ribosomes in vitro. Probably functions indirectly by altering the affinity of the ribosome for aminoacyl-tRNA, thus increasing their reactivity as acceptors for peptidyl transferase. This is Elongation factor P from Neisseria gonorrhoeae (strain NCCP11945).